Here is a 905-residue protein sequence, read N- to C-terminus: Alanine--tRNA ligase (905 aa).

Residues histidine 569, histidine 573, cysteine 693, and histidine 697 each contribute to the Zn(2+) site.

It belongs to the class-II aminoacyl-tRNA synthetase family. Zn(2+) is required as a cofactor.

It is found in the cytoplasm. The enzyme catalyses tRNA(Ala) + L-alanine + ATP = L-alanyl-tRNA(Ala) + AMP + diphosphate. Catalyzes the attachment of alanine to tRNA(Ala) in a two-step reaction: alanine is first activated by ATP to form Ala-AMP and then transferred to the acceptor end of tRNA(Ala). Also edits incorrectly charged Ser-tRNA(Ala) and Gly-tRNA(Ala) via its editing domain. The sequence is that of Alanine--tRNA ligase from Roseiflexus sp. (strain RS-1).